Here is a 310-residue protein sequence, read N- to C-terminus: Prohibitin-2 (310 aa).

A helical; Signal-anchor for type II membrane protein membrane pass occupies residues 38 to 58 (FAGLGGLLLLGGGALFINNAL). The interval 130–144 (DVVQLPTIYRTLGQD) is interaction with ATG8. The AIM motif lies at 138–141 (YRTL). Residues 212 to 253 (NAVEAKQIAQQDAQRAAFVVDKARQEKQGMVVRAQGEAKSAE) adopt a coiled-coil conformation.

Belongs to the prohibitin family. The mitochondrial prohibitin complex consists of two subunits (PHB1 and PHB2). The subunits assemble into a membrane-associated ring-shaped supercomplex of approximately 1 mDa. The mitochondrial prohibitin complex interacts with the m-AAA protease, a heterohexamer composed of YTA12/RCA1 and YTA10/AFG3. The mitochondrial prohibitin complex interacts with ATG8 and the interaction may support mitophagosome assembly. Post-translationally, the N-terminus is blocked.

Its subcellular location is the mitochondrion inner membrane. Prohibitin probably acts as a holdase/unfoldase for the stabilization of newly synthesized mitochondrial proteins. Involved in mitophagy; may act as an adapter for ATG8 that supports mitophagosome assembly. Negatively regulates the proteolytic processing of ATG32 via the i-AAA protease. Acts as a negative regulator of the m-AAA protease. The protein is Prohibitin-2 (PHB2) of Saccharomyces cerevisiae (strain ATCC 204508 / S288c) (Baker's yeast).